Consider the following 835-residue polypeptide: Transcription intermediary factor 1-beta (835 aa).

Low complexity predominate over residues 14-24 (AATAASAASGS). The segment at 14 to 57 (AATAASAASGSPGSGEGSAGGEKRPAASSAAAASASASSPAGGG) is disordered. Phosphoserine is present on residues serine 24, serine 27, and serine 31. Lysine 36 participates in a covalent cross-link: Glycyl lysine isopeptide (Lys-Gly) (interchain with G-Cter in SUMO2). The segment covering 39-53 (AASSAAAASASASSP) has biased composition (low complexity). Residue serine 52 is modified to Phosphoserine. The RING-type zinc finger occupies 67–123 (CGVCRERLRPERDPRLLPCLHSACSACLGPATPAAANNSGDGGSAGDGAMVDCPVCK). Residue lysine 129 forms a Glycyl lysine isopeptide (Lys-Gly) (interchain with G-Cter in SUMO2) linkage. Phosphoserine is present on serine 140. The segment at 150 to 197 (DANQCCTSCEDNAPATSYCVECSEPLCETCVEAHQRVKYTKDHTVRST) adopts a B box-type 1; atypical zinc-finger fold. Cysteine 155, cysteine 158, cysteine 179, and histidine 183 together coordinate Zn(2+). A Glycyl lysine isopeptide (Lys-Gly) (interchain with G-Cter in SUMO2) cross-link involves residue lysine 201. A B box-type 2 zinc finger spans residues 206–247 (ERTVYCNVHKHEPLVLFCESCDTLTCRDCQLNAHKDHQYQFL). Cysteine 211, histidine 214, cysteine 234, and histidine 239 together coordinate Zn(2+). Residues 248–378 (EDAVRNQRKL…LIYFQLHRAL (131 aa)) are leucine zipper alpha helical coiled-coil region. The interaction with MAGEC2 stretch occupies residues 249 to 378 (DAVRNQRKLL…LIYFQLHRAL (130 aa)). Residues lysine 256 and lysine 263 each participate in a glycyl lysine isopeptide (Lys-Gly) (interchain with G-Cter in SUMO2) cross-link. N6-acetyllysine is present on lysine 268. Residue lysine 274 forms a Glycyl lysine isopeptide (Lys-Gly) (interchain with G-Cter in SUMO2) linkage. N6-acetyllysine; alternate is present on lysine 306. Residue lysine 306 forms a Glycyl lysine isopeptide (Lys-Gly) (interchain with G-Cter in SUMO2); alternate linkage. Lysine 321 participates in a covalent cross-link: Glycyl lysine isopeptide (Lys-Gly) (interchain with G-Cter in SUMO2). Position 342 is an N6-acetyllysine (lysine 342). Lysine 368 participates in a covalent cross-link: Glycyl lysine isopeptide (Lys-Gly) (interchain with G-Cter in SUMO2). An involved in binding PPP1CA region spans residues 368-372 (KLIYF). Lysine 379 carries the N6-acetyllysine; alternate modification. Lysine 379 is covalently cross-linked (Glycyl lysine isopeptide (Lys-Gly) (interchain with G-Cter in SUMO2); alternate). Lysine 379 participates in a covalent cross-link: Glycyl lysine isopeptide (Lys-Gly) (interchain with G-Cter in SUMO1); alternate. A Glycyl lysine isopeptide (Lys-Gly) (interchain with G-Cter in SUMO2) cross-link involves residue lysine 409. Positions 413–481 (ERPGTNSTGP…SRSGEGEVSG (69 aa)) are disordered. Position 419 is a phosphoserine (serine 419). Lysine 436 participates in a covalent cross-link: Glycyl lysine isopeptide (Lys-Gly) (interchain with G-Cter in SUMO2). Residues 436–445 (KQGSGSSQPM) show a composition bias toward polar residues. 2 positions are modified to phosphoserine: serine 439 and serine 441. Lysine 470 participates in a covalent cross-link: Glycyl lysine isopeptide (Lys-Gly) (interchain with G-Cter in SUMO2); alternate. Lysine 470 participates in a covalent cross-link: Glycyl lysine isopeptide (Lys-Gly) (interchain with G-Cter in SUMO1); alternate. Arginine 471 is subject to Citrulline. The residue at position 472 (serine 472) is a Phosphoserine. Arginine 473 bears the Citrulline mark. Phosphoserine is present on residues serine 474, serine 480, and serine 490. An HP1 box region spans residues 477 to 514 (GEVSGLMRKVPRVSLERLDLDLTSDSQPPVFKVFPGST). The PxVxL motif signature appears at 482–495 (LMRKVPRVSLERLD). Threonine 499 is modified (phosphothreonine). Phosphoserine is present on serine 502. Lysine 508 is covalently cross-linked (Glycyl lysine isopeptide (Lys-Gly) (interchain with G-Cter in SUMO2)). Residue lysine 555 forms a Glycyl lysine isopeptide (Lys-Gly) (interchain with G-Cter in SUMO2); alternate linkage. A Glycyl lysine isopeptide (Lys-Gly) (interchain with G-Cter in SUMO); alternate cross-link involves residue lysine 555. Lysine 576 is covalently cross-linked (Glycyl lysine isopeptide (Lys-Gly) (interchain with G-Cter in SUMO2)). At serine 595 the chain carries Phosphoserine. A PHD-type zinc finger spans residues 626-673 (ATICRVCQKPGDLVMCNQCEFCFHLDCHLPSLQDVPGEEWSCSLCHVL). Lysine 677 is covalently cross-linked (Glycyl lysine isopeptide (Lys-Gly) (interchain with G-Cter in SUMO)). Phosphoserine occurs at positions 684, 690, and 698. Positions 696–800 (KLSPANQRKC…RFFETRMNDA (105 aa)) constitute a Bromo domain. Lysine 751 is covalently cross-linked (Glycyl lysine isopeptide (Lys-Gly) (interchain with G-Cter in SUMO2); alternate). Lysine 751 participates in a covalent cross-link: Glycyl lysine isopeptide (Lys-Gly) (interchain with G-Cter in SUMO1); alternate. Lysine 751 participates in a covalent cross-link: Glycyl lysine isopeptide (Lys-Gly) (interchain with G-Cter in SUMO); alternate. Serine 753 bears the Phosphoserine mark. Tyrosine 756 is subject to Phosphotyrosine. Phosphoserine is present on serine 758. 3 positions are modified to N6-acetyllysine; alternate: lysine 771, lysine 775, and lysine 780. Glycyl lysine isopeptide (Lys-Gly) (interchain with G-Cter in SUMO2); alternate cross-links involve residues lysine 771, lysine 775, and lysine 780. Residue lysine 780 forms a Glycyl lysine isopeptide (Lys-Gly) (interchain with G-Cter in SUMO1); alternate linkage. Serine 785 is modified (phosphoserine). Lysine 805 participates in a covalent cross-link: Glycyl lysine isopeptide (Lys-Gly) (interchain with G-Cter in SUMO2). Serine 825 is modified (phosphoserine; by ATM and ATR and dsDNA kinase).

It belongs to the TRIM/RBCC family. In terms of assembly, interacts with ZNF382. Interacts with SETX. Oligomer; the RBCC domain homotrimerizes and interacts with one molecule of KRAB to form the KRAB-KAP1 corepressor complex. Binding to a KRAB domain is an absolute requirement for silencing gene expression. Interacts with CEBPB and NR3C1. Interacts with a number of KRAB-ZFP proteins including ZNF10, ZFP53, ZFP68 and ZNF256. Interacts with NCOR1, NR3C1 and CHD3. Interacts with CEBPB (via the RING-type and PHD-type zinc fingers). Component of a ternary complex that includes TRIM28, a HP1 protein (CBX1, CBX3 OR CBX5), a KRAB domain-containing protein, and DNA. Interacts with CBX5 (via the PxVxL motif); the interaction occurs in interphase nuclei and competes for binding POGZ. Interacts with POGZ; the interaction competes for interaction with CBX5. Interacts with SETDB1; the interaction is enhanced by KAP1 sumoylation, stimulates SETDB1 histone methyltransferase activity and gene silencing. Interacts (via the PHD-type zinc finger) with UBE2I; the interaction is required for sumoylation and repressor activity. Component of the TRIM28/KAP1-ERBB4-MDM2 complex involved in connecting growth factor and DNA damage responses. Interacts directly with ERBB4; the interaction represses ERBB4-mediated transcription activity. Interacts with MDM2; the interaction contributes to p53/TP53 inactivation. Component of the TRIM28/KAP1-MDM2-p53/TP53; involved in regulating p53/TP53 stabilization and activity. Interacts (via the leucine zipper alpha helical coiled-coil) with E2F1 (central region); the interaction inhibits E2F1 acetylation and transcriptional activity. Interacts with PPP1CA; the interaction dephosphorylates TRIM28 at Ser-824 and forms a complex at the p21 promoter site. Interacts with PPP1CB; the interaction is weak but is increased on dephosphorylation at Ser-824. Interacts with SMARCAD1. Interacts with, and sumoylates IRF7. Interacts with MAGEC2. Part of a complex composed of TRIM28, HDAC1, HDAC2 and EHMT2. Interacts with AICDA. The large PER complex involved in the histone methylation is composed of at least PER2, CBX3, TRIM28, SUV39H1 and/or SUV39H2; CBX3 mediates the formation of the complex. Interacts with NR4A3; the interactions potentiates NR4A3 activity on NurRE promoter. Interacts (unphosphorylated or phosphorylated form) with ZBTB1 (via BTB domain). Probably part of a corepressor complex containing ZNF304, TRIM28, SETDB1 and DNMT1. Interacts with ATRX. Forms a complex with ATRX, SETDB1 and ZNF274. Interacts with ZFP568; the interaction mediates ZFP568 transcriptional repression activity. Interacts with RRP1B. Interacts with CRY1. Interacts with ZNF263; recruited to the SIX3 promoter along with other proteins involved in chromatin modification and transcriptional corepression where it contributes to transcriptional repression. Interacts with CYREN (via XLF motif). Interacts with TRIM17; this interaction prevents TRIM28 activity. Interacts with ZNF746. Interacts with PHF13. Interacts with ZNF354C. Interacts with ZNF432; the interaction is independent of PARP1. In terms of processing, ATM-induced phosphorylation on Ser-825 represses sumoylation leading to the de-repression of expression of a subset of genes involved in cell cycle control and apoptosis in response to genotoxic stress. Dephosphorylation by the phosphatases, PPP1CA and PP1CB forms, allows sumoylation and expression of TRIM28 target genes. Post-translationally, sumoylation/desumoylation events regulate TRIM28-mediated transcriptional repression. Sumoylation is required for interaction with CHD3 and SETDB1 and the corepressor activity. Represses and is repressed by Ser-824 phosphorylation. Enhances the TRIM28 corepressor activity, inhibiting transcriptional activity of a number of genes including GADD45A and CDKN1A/p21. Lys-555, Lys-780 and Lys-805 are the major sites of sumoylation. In response to Dox-induced DNA damage, enhanced phosphorylation on Ser-825 prevents sumoylation and allows de-repression of CDKN1A/p21. Auto-ubiquitinated; enhanced by MAGEA2 and MAGEC2. In terms of processing, citrullinated by PADI4. Post-translationally, ADP-ribosylated by SIRT6, promoting TRIM28/KAP1 interaction with CBX5, thereby contributing to the packaging of LINE-1 retrotransposon elements into transcriptionally repressive heterochromatin.

It localises to the nucleus. The enzyme catalyses S-ubiquitinyl-[E2 ubiquitin-conjugating enzyme]-L-cysteine + [acceptor protein]-L-lysine = [E2 ubiquitin-conjugating enzyme]-L-cysteine + N(6)-ubiquitinyl-[acceptor protein]-L-lysine.. Its pathway is protein modification; protein sumoylation. In terms of biological role, nuclear corepressor for KRAB domain-containing zinc finger proteins (KRAB-ZFPs). Mediates gene silencing by recruiting CHD3, a subunit of the nucleosome remodeling and deacetylation (NuRD) complex, and SETDB1 (which specifically methylates histone H3 at 'Lys-9' (H3K9me)) to the promoter regions of KRAB target genes. Enhances transcriptional repression by coordinating the increase in H3K9me, the decrease in histone H3 'Lys-9 and 'Lys-14' acetylation (H3K9ac and H3K14ac, respectively) and the disposition of HP1 proteins to silence gene expression. Recruitment of SETDB1 induces heterochromatinization. May play a role as a coactivator for CEBPB and NR3C1 in the transcriptional activation of ORM1. Also a corepressor for ERBB4. Inhibits E2F1 activity by stimulating E2F1-HDAC1 complex formation and inhibiting E2F1 acetylation. May serve as a partial backup to prevent E2F1-mediated apoptosis in the absence of RB1. Important regulator of CDKN1A/p21(CIP1). Has E3 SUMO-protein ligase activity toward itself via its PHD-type zinc finger. Also specifically sumoylates IRF7, thereby inhibiting its transactivation activity. Ubiquitinates p53/TP53 leading to its proteasomal degradation; the function is enhanced by MAGEC2 and MAGEA2, and possibly MAGEA3 and MAGEA6. Mediates the nuclear localization of KOX1, ZNF268 and ZNF300 transcription factors. In association with isoform 2 of ZFP90, is required for the transcriptional repressor activity of FOXP3 and the suppressive function of regulatory T-cells (Treg). Probably forms a corepressor complex required for activated KRAS-mediated promoter hypermethylation and transcriptional silencing of tumor suppressor genes (TSGs) or other tumor-related genes in colorectal cancer (CRC) cells. Required to maintain a transcriptionally repressive state of genes in undifferentiated embryonic stem cells (ESCs). In ESCs, in collaboration with SETDB1, is also required for H3K9me3 and silencing of endogenous and introduced retroviruses in a DNA-methylation independent-pathway. Associates at promoter regions of tumor suppressor genes (TSGs) leading to their gene silencing. The SETDB1-TRIM28-ZNF274 complex may play a role in recruiting ATRX to the 3'-exons of zinc finger genes with atypical chromatin signatures to establish or maintain/protect H3K9me3 at these transcriptionally active regions. In Rattus norvegicus (Rat), this protein is Transcription intermediary factor 1-beta.